The following is a 628-amino-acid chain: Alpha-L-arabinofuranosidase A (628 aa).

Positions 1–25 are cleaved as a signal peptide; that stretch reads MVAFSALSGVSALSLLLCLVQHAHG. Residues asparagine 36, asparagine 51, asparagine 74, asparagine 152, asparagine 171, asparagine 260, asparagine 359, and asparagine 493 are each glycosylated (N-linked (GlcNAc...) asparagine).

The protein belongs to the glycosyl hydrolase 51 family.

It is found in the secreted. It catalyses the reaction Hydrolysis of terminal non-reducing alpha-L-arabinofuranoside residues in alpha-L-arabinosides.. It functions in the pathway glycan metabolism; L-arabinan degradation. Functionally, alpha-L-arabinofuranosidase involved in the degradation of arabinoxylan, a major component of plant hemicellulose. Acts only on small linear 1,5-alpha-linked L-arabinofuranosyl oligosaccharides. The protein is Alpha-L-arabinofuranosidase A (abfA) of Aspergillus kawachii (strain NBRC 4308) (White koji mold).